The following is a 131-amino-acid chain: Structural protein ORF131 (131 aa).

This sequence belongs to the viral ORF131/RIP family.

It is found in the virion. The polypeptide is Structural protein ORF131 (Acidianus convivator (ATV)).